The following is a 161-amino-acid chain: Ubiquitin D (161 aa).

2 consecutive Ubiquitin-like domains span residues 3–77 (SCVC…LKVV) and 86–159 (LSLV…AHCI).

This sequence belongs to the ubiquitin D family. In terms of assembly, interacts directly with the 26S proteasome. Interacts with NUB1; this interaction facilitates the linking of UBD-conjugated target protein to the proteasome complex and accelerates its own degradation and that of its conjugates. Interacts (via ubiquitin-like 1 domain) with the spindle checkpoint protein MAD2L1 during mitosis. Present in aggresomes of proteasome inhibited cells. Interacts with HDAC6 under proteasome impairment conditions. Forms a thioester with UBA6 in cells stimulated with tumor necrosis factor-alpha (TNFa) and interferon-gamma (IFNg). Interacts with SQSTM1 and TP53/p53. Post-translationally, can be acetylated.

It localises to the nucleus. The protein resides in the cytoplasm. Ubiquitin-like protein modifier which can be covalently attached to target proteins and subsequently leads to their degradation by the 26S proteasome, in a NUB1-dependent manner. Conjugation to the target protein is activated by UBA6 via adenylation of its C-terminal glycine. Probably functions as a survival factor. Promotes the expression of the proteasome subunit beta type-9 (PSMB9/LMP2). Regulates TNF-alpha-induced and LPS-mediated activation of the central mediator of innate immunity NF-kappa-B by promoting TNF-alpha-mediated proteasomal degradation of ubiquitinated-I-kappa-B-alpha. Required for TNF-alpha-induced p65 nuclear translocation in renal tubular epithelial cells (RTECs). May be involved in dendritic cell (DC) maturation, the process by which immature dendritic cells differentiate into fully competent antigen-presenting cells that initiate T-cell responses. Mediates mitotic non-disjunction and chromosome instability, in long-term in vitro culture and cancers, by abbreviating mitotic phase and impairing the kinetochore localization of MAD2L1 during the prometaphase stage of the cell cycle. May be involved in the formation of aggresomes when proteasome is saturated or impaired. Mediates apoptosis in a caspase-dependent manner, especially in renal epithelium and tubular cells during renal diseases. In Rattus norvegicus (Rat), this protein is Ubiquitin D (Ubd).